Here is a 700-residue protein sequence, read N- to C-terminus: Polyribonucleotide nucleotidyltransferase (700 aa).

2 residues coordinate Mg(2+): D484 and D490. A KH domain is found at 551–610; sequence PRVIRMVVDPEKIREIIGPGGKTISKIIAETGVKIDIEEDGRLYITASDLRSGERAKQMI. The 69-residue stretch at 620–688 folds into the S1 motif domain; the sequence is GEIYLGKVLR…KLGRISLSRK (69 aa).

Belongs to the polyribonucleotide nucleotidyltransferase family. Requires Mg(2+) as cofactor.

Its subcellular location is the cytoplasm. The enzyme catalyses RNA(n+1) + phosphate = RNA(n) + a ribonucleoside 5'-diphosphate. In terms of biological role, involved in mRNA degradation. Catalyzes the phosphorolysis of single-stranded polyribonucleotides processively in the 3'- to 5'-direction. The polypeptide is Polyribonucleotide nucleotidyltransferase (Thermoanaerobacter sp. (strain X514)).